The following is a 429-amino-acid chain: Asparagine--tRNA ligase (429 aa).

This sequence belongs to the class-II aminoacyl-tRNA synthetase family. In terms of assembly, homodimer.

It is found in the cytoplasm. It catalyses the reaction tRNA(Asn) + L-asparagine + ATP = L-asparaginyl-tRNA(Asn) + AMP + diphosphate + H(+). This chain is Asparagine--tRNA ligase, found in Desulforamulus reducens (strain ATCC BAA-1160 / DSM 100696 / MI-1) (Desulfotomaculum reducens).